A 77-amino-acid polypeptide reads, in one-letter code: uncharacterized protein (77 aa).

A run of 2 helical transmembrane segments spans residues 22–42 (VFAN…LPVG) and 44–64 (LIGL…FFLG).

The protein resides in the cell membrane. This is an uncharacterized protein from Methanocaldococcus jannaschii (strain ATCC 43067 / DSM 2661 / JAL-1 / JCM 10045 / NBRC 100440) (Methanococcus jannaschii).